The primary structure comprises 138 residues: Gastrula zinc finger protein XlCGF44.2 (138 aa).

5 C2H2-type zinc fingers span residues Phe5–His27, Phe32–His54, Phe60–His82, Tyr88–His110, and Phe116–His138.

This sequence belongs to the krueppel C2H2-type zinc-finger protein family.

The protein resides in the nucleus. May be involved in transcriptional regulation. In Xenopus laevis (African clawed frog), this protein is Gastrula zinc finger protein XlCGF44.2.